We begin with the raw amino-acid sequence, 292 residues long: NAD kinase (292 aa).

Catalysis depends on D74, which acts as the Proton acceptor. NAD(+)-binding positions include 74 to 75 (DG), 147 to 148 (NE), D177, and 188 to 193 (TGYSLS).

It belongs to the NAD kinase family. The cofactor is a divalent metal cation.

The protein localises to the cytoplasm. The enzyme catalyses NAD(+) + ATP = ADP + NADP(+) + H(+). Its function is as follows. Involved in the regulation of the intracellular balance of NAD and NADP, and is a key enzyme in the biosynthesis of NADP. Catalyzes specifically the phosphorylation on 2'-hydroxyl of the adenosine moiety of NAD to yield NADP. This is NAD kinase from Cytophaga hutchinsonii (strain ATCC 33406 / DSM 1761 / CIP 103989 / NBRC 15051 / NCIMB 9469 / D465).